The sequence spans 354 residues: Protein RecA (354 aa).

67–74 is a binding site for ATP; sequence GPESSGKT.

Belongs to the RecA family.

The protein localises to the cytoplasm. Its function is as follows. Can catalyze the hydrolysis of ATP in the presence of single-stranded DNA, the ATP-dependent uptake of single-stranded DNA by duplex DNA, and the ATP-dependent hybridization of homologous single-stranded DNAs. It interacts with LexA causing its activation and leading to its autocatalytic cleavage. The chain is Protein RecA from Enterobacter agglomerans (Erwinia herbicola).